A 353-amino-acid chain; its full sequence is Photosystem II D2 protein (353 aa).

At T2 the chain carries N-acetylthreonine. T2 carries the post-translational modification Phosphothreonine. The chain crosses the membrane as a helical span at residues 41–61; the sequence is CAYFALGGWFTGTTFVTSWYT. H118 is a chlorophyll a binding site. The helical transmembrane segment at 125–141 threads the bilayer; it reads GFMLRQFELARSVQLRP. The pheophytin a site is built by Q130 and N143. The helical transmembrane segment at 153 to 166 threads the bilayer; the sequence is VFVSVFLIYPLGQS. H198 contributes to the chlorophyll a binding site. The helical transmembrane segment at 208 to 228 threads the bilayer; the sequence is AALLCAIHGATVENTLFEDGD. A plastoquinone-binding residues include H215 and F262. H215 contributes to the Fe cation binding site. H269 lines the Fe cation pocket. A helical membrane pass occupies residues 279-295; sequence GLWMSAIGVVGLALNLR.

Belongs to the reaction center PufL/M/PsbA/D family. In terms of assembly, PSII is composed of 1 copy each of membrane proteins PsbA, PsbB, PsbC, PsbD, PsbE, PsbF, PsbH, PsbI, PsbJ, PsbK, PsbL, PsbM, PsbT, PsbX, PsbY, PsbZ, Psb30/Ycf12, at least 3 peripheral proteins of the oxygen-evolving complex and a large number of cofactors. It forms dimeric complexes. It depends on The D1/D2 heterodimer binds P680, chlorophylls that are the primary electron donor of PSII, and subsequent electron acceptors. It shares a non-heme iron and each subunit binds pheophytin, quinone, additional chlorophylls, carotenoids and lipids. There is also a Cl(-1) ion associated with D1 and D2, which is required for oxygen evolution. The PSII complex binds additional chlorophylls, carotenoids and specific lipids. as a cofactor.

Its subcellular location is the plastid. The protein resides in the chloroplast thylakoid membrane. It catalyses the reaction 2 a plastoquinone + 4 hnu + 2 H2O = 2 a plastoquinol + O2. Photosystem II (PSII) is a light-driven water:plastoquinone oxidoreductase that uses light energy to abstract electrons from H(2)O, generating O(2) and a proton gradient subsequently used for ATP formation. It consists of a core antenna complex that captures photons, and an electron transfer chain that converts photonic excitation into a charge separation. The D1/D2 (PsbA/PsbD) reaction center heterodimer binds P680, the primary electron donor of PSII as well as several subsequent electron acceptors. D2 is needed for assembly of a stable PSII complex. In Cryptomeria japonica (Japanese cedar), this protein is Photosystem II D2 protein.